The chain runs to 429 residues: MNPLALQPISGSLHGTIKVPGDKSISHRSIIFGSIAKGTTTVTNFLDGEDCMRTIDAFKEMGVPIQKNGSNVTIEGTGLSGLMEPNKELDFGNSGTTTRLMLGLLAGLPFNTTVYGDASLSKRPMNRVVDPLRLMGATIDGKEQGNYLPLTITGTSLNSIDYDLPVKSAQVKSALLLAGLHSENTTIVREKSPTRNHTETMLQAFGANIKSDGHTTSISKTDDLQGCHVEVPGDISSAAFFVVAACMVPGSEVILKDVGLNETRTGIIDIVLQMGAKLTIQNERIVGGEKIGDILIISSPLTGVTIEGDAIPRLIDEIPILALLATQADGTTIIKDAEELKVKETDRLLAVSENLTQLGADVTPTEDGMIIRGNTKLKGGNFKSFDDHRIAMMGIIASLVTEDTVVVDNIDCINISYPNFVNDLQSILK.

Residues lysine 23, serine 24, and arginine 28 each contribute to the 3-phosphoshikimate site. Lysine 23 provides a ligand contact to phosphoenolpyruvate. 2 residues coordinate phosphoenolpyruvate: glycine 95 and arginine 123. Serine 168, glutamine 170, aspartate 316, and lysine 343 together coordinate 3-phosphoshikimate. Phosphoenolpyruvate is bound at residue glutamine 170. Aspartate 316 acts as the Proton acceptor in catalysis. Positions 347 and 389 each coordinate phosphoenolpyruvate.

This sequence belongs to the EPSP synthase family. As to quaternary structure, monomer.

It localises to the cytoplasm. The catalysed reaction is 3-phosphoshikimate + phosphoenolpyruvate = 5-O-(1-carboxyvinyl)-3-phosphoshikimate + phosphate. The protein operates within metabolic intermediate biosynthesis; chorismate biosynthesis; chorismate from D-erythrose 4-phosphate and phosphoenolpyruvate: step 6/7. Catalyzes the transfer of the enolpyruvyl moiety of phosphoenolpyruvate (PEP) to the 5-hydroxyl of shikimate-3-phosphate (S3P) to produce enolpyruvyl shikimate-3-phosphate and inorganic phosphate. The sequence is that of 3-phosphoshikimate 1-carboxyvinyltransferase from Oceanobacillus iheyensis (strain DSM 14371 / CIP 107618 / JCM 11309 / KCTC 3954 / HTE831).